A 502-amino-acid polypeptide reads, in one-letter code: Cytochrome P450 83A1 (502 aa).

The chain crosses the membrane as a helical span at residues Met-1–Gln-21. Position 442 (Cys-442) interacts with heme.

Belongs to the cytochrome P450 family. It depends on heme as a cofactor.

The protein resides in the endoplasmic reticulum membrane. It catalyses the reaction an (E)-omega-(methylsulfanyl)-alkanal oxime + glutathione + reduced [NADPH--hemoprotein reductase] + O2 = an S-[(1E)-1-(hydroxyimino)-omega-(methylsulfanyl)alkyl]-L-glutathione + oxidized [NADPH--hemoprotein reductase] + 2 H2O + H(+). In terms of biological role, involved in the metabolism of aliphatic and aromatic oximes. Involved in the biosynthesis of both short-chain and long-chain aliphatic glucosinolates. This is Cytochrome P450 83A1 (CYP83A1) from Arabidopsis thaliana (Mouse-ear cress).